Reading from the N-terminus, the 47-residue chain is Large ribosomal subunit protein eL40 (47 aa).

The protein belongs to the eukaryotic ribosomal protein eL40 family.

The sequence is that of Large ribosomal subunit protein eL40 from Methanocaldococcus jannaschii (strain ATCC 43067 / DSM 2661 / JAL-1 / JCM 10045 / NBRC 100440) (Methanococcus jannaschii).